Reading from the N-terminus, the 388-residue chain is L-lactate dehydrogenase (388 aa).

The region spanning 1–380 (MIISAASDYR…SADALSRVTR (380 aa)) is the FMN hydroxy acid dehydrogenase domain. Tyrosine 24 contributes to the substrate binding site. FMN contacts are provided by serine 106 and glutamine 127. Tyrosine 129 is a substrate binding site. Threonine 155 is an FMN binding site. Arginine 164 is a binding site for substrate. Lysine 251 is a binding site for FMN. Histidine 275 (proton acceptor) is an active-site residue. Position 278 (arginine 278) interacts with substrate. 306–330 (DSGIRSGLDVVRMLALGADAVLLGR) serves as a coordination point for FMN.

Belongs to the FMN-dependent alpha-hydroxy acid dehydrogenase family. FMN is required as a cofactor.

Its subcellular location is the cell inner membrane. The enzyme catalyses (S)-lactate + A = pyruvate + AH2. Functionally, catalyzes the conversion of L-lactate to pyruvate. Is coupled to the respiratory chain. The polypeptide is L-lactate dehydrogenase (Xanthomonas euvesicatoria pv. vesicatoria (strain 85-10) (Xanthomonas campestris pv. vesicatoria)).